Reading from the N-terminus, the 560-residue chain is DNA ligase B (560 aa).

Lys124 functions as the N6-AMP-lysine intermediate in the catalytic mechanism.

The protein belongs to the NAD-dependent DNA ligase family. LigB subfamily.

It carries out the reaction NAD(+) + (deoxyribonucleotide)n-3'-hydroxyl + 5'-phospho-(deoxyribonucleotide)m = (deoxyribonucleotide)n+m + AMP + beta-nicotinamide D-nucleotide.. Its function is as follows. Catalyzes the formation of phosphodiester linkages between 5'-phosphoryl and 3'-hydroxyl groups in double-stranded DNA using NAD as a coenzyme and as the energy source for the reaction. The protein is DNA ligase B of Escherichia coli O6:H1 (strain CFT073 / ATCC 700928 / UPEC).